A 193-amino-acid polypeptide reads, in one-letter code: uncharacterized protein (193 aa).

The first 26 residues, 1-26 (MRNVFVGALCMCGMSFVFSDSVRSAA), serve as a signal peptide directing secretion.

This is an uncharacterized protein from Treponema pallidum (strain Nichols).